The sequence spans 486 residues: NGFI-A-binding protein 1 (486 aa).

The tract at residues 4 to 82 is NCD1; that stretch reads ALPRTLGELQ…RDWVTNPGLF (79 aa). Glycyl lysine isopeptide (Lys-Gly) (interchain with G-Cter in SUMO2) cross-links involve residues Lys-126, Lys-129, and Lys-143. The tract at residues 160-187 is disordered; it reads WQGHHATESEHSLSPADLGSPASPKESS. Residues Ser-171 and Ser-182 each carry the phosphoserine modification. Lys-211 is covalently cross-linked (Glycyl lysine isopeptide (Lys-Gly) (interchain with G-Cter in SUMO2)). Residues 220–309 are NCD2; sequence LLKNNKKLAK…ARQVSREVTY (90 aa). Positions 306–337 are necessary for nuclear localization; it reads EVTYKYTYRTTRLKCGERDELSPKRIKIEDGF. Ser-327 carries the post-translational modification Phosphoserine. Residue Lys-332 forms a Glycyl lysine isopeptide (Lys-Gly) (interchain with G-Cter in SUMO1); alternate linkage. Lys-332 participates in a covalent cross-link: Glycyl lysine isopeptide (Lys-Gly) (interchain with G-Cter in SUMO2); alternate. Glycyl lysine isopeptide (Lys-Gly) (interchain with G-Cter in SUMO2) cross-links involve residues Lys-354, Lys-368, and Lys-372. The disordered stretch occupies residues 398 to 438; sequence RQSSGEQSPDGGLPSDSSDGQGERPLNLRIPSVQNRQPHHF. Positions 404 to 417 are enriched in low complexity; that stretch reads QSPDGGLPSDSSDG. A Phosphoserine modification is found at Ser-405. Glycyl lysine isopeptide (Lys-Gly) (interchain with G-Cter in SUMO2) cross-links involve residues Lys-453, Lys-464, and Lys-476. Residue Lys-479 forms a Glycyl lysine isopeptide (Lys-Gly) (interchain with G-Cter in SUMO1); alternate linkage. A Glycyl lysine isopeptide (Lys-Gly) (interchain with G-Cter in SUMO2); alternate cross-link involves residue Lys-479.

It belongs to the NAB family. As to quaternary structure, homomultimers may associate with EGR1 bound to DNA. As to expression, widely expressed in adult. In day 16 embryo highest levels in forebrain, thymus, salivary gland and cartilage.

It localises to the nucleus. Acts as a transcriptional repressor for zinc finger transcription factors EGR1 and EGR2. This is NGFI-A-binding protein 1 (Nab1) from Mus musculus (Mouse).